The chain runs to 299 residues: tRNA dimethylallyltransferase (299 aa).

11–18 (GPTAVGKT) contributes to the ATP binding site. 13–18 (TAVGKT) serves as a coordination point for substrate. The tract at residues 36–39 (DSQQ) is interaction with substrate tRNA.

It belongs to the IPP transferase family. In terms of assembly, monomer. Requires Mg(2+) as cofactor.

The enzyme catalyses adenosine(37) in tRNA + dimethylallyl diphosphate = N(6)-dimethylallyladenosine(37) in tRNA + diphosphate. Its function is as follows. Catalyzes the transfer of a dimethylallyl group onto the adenine at position 37 in tRNAs that read codons beginning with uridine, leading to the formation of N6-(dimethylallyl)adenosine (i(6)A). This chain is tRNA dimethylallyltransferase, found in Streptococcus pyogenes serotype M4 (strain MGAS10750).